The primary structure comprises 321 residues: tRNA U34 carboxymethyltransferase (321 aa).

Carboxy-S-adenosyl-L-methionine contacts are provided by residues lysine 90, tryptophan 104, lysine 109, glycine 129, 151–153 (DPT), 180–181 (IE), methionine 195, tyrosine 199, and arginine 314.

The protein belongs to the class I-like SAM-binding methyltransferase superfamily. CmoB family. As to quaternary structure, homotetramer.

It catalyses the reaction carboxy-S-adenosyl-L-methionine + 5-hydroxyuridine(34) in tRNA = 5-carboxymethoxyuridine(34) in tRNA + S-adenosyl-L-homocysteine + H(+). Catalyzes carboxymethyl transfer from carboxy-S-adenosyl-L-methionine (Cx-SAM) to 5-hydroxyuridine (ho5U) to form 5-carboxymethoxyuridine (cmo5U) at position 34 in tRNAs. This Mannheimia succiniciproducens (strain KCTC 0769BP / MBEL55E) protein is tRNA U34 carboxymethyltransferase.